An 859-amino-acid chain; its full sequence is Protein EFR3 homolog (859 aa).

Disordered stretches follow at residues 638-657 (DDPL…TPRT) and 697-724 (RDGN…PDGY). Residues 704–722 (WQREDGQNFDSTDGRESPD) show a composition bias toward basic and acidic residues.

The protein belongs to the EFR3 family.

This chain is Protein EFR3 homolog, found in Caenorhabditis briggsae.